The following is a 64-amino-acid chain: DNA gyrase inhibitor YacG (64 aa).

Zn(2+)-binding residues include cysteine 9, cysteine 12, cysteine 28, and cysteine 32. Residues 42–64 (DEENAIPGAPDMSDSDGWSEEQY) form a disordered region. Residues 54–64 (SDSDGWSEEQY) show a composition bias toward acidic residues.

It belongs to the DNA gyrase inhibitor YacG family. As to quaternary structure, interacts with GyrB. Requires Zn(2+) as cofactor.

Inhibits all the catalytic activities of DNA gyrase by preventing its interaction with DNA. Acts by binding directly to the C-terminal domain of GyrB, which probably disrupts DNA binding by the gyrase. The chain is DNA gyrase inhibitor YacG from Vibrio vulnificus (strain CMCP6).